The chain runs to 250 residues: MWIGVISLFPEMFRAITEYGVTGRAVKHGLLNVECWDPRDFTYDRHHTVDDRPYGGGPGMLMMVQPLREAIHQAKAAAGDGAKVIYLSPQGRKLDQQGVCELATNEKLILVCGRYEGIDERVIQTEIDEEWSVGDYVLSGGELPAMIMIDAVARFVPGVLGHAASAKEDSFAEGLLDHPHYTRPEVLDGMAVPAVLLSGNHAHINRWRMKQSLGRTWLRRPELLESLALTDEQRVLLAEFQQEHLQRTAE.

S-adenosyl-L-methionine contacts are provided by residues Gly113 and 133–138 (VGDYVL).

It belongs to the RNA methyltransferase TrmD family. Homodimer.

Its subcellular location is the cytoplasm. It catalyses the reaction guanosine(37) in tRNA + S-adenosyl-L-methionine = N(1)-methylguanosine(37) in tRNA + S-adenosyl-L-homocysteine + H(+). Specifically methylates guanosine-37 in various tRNAs. This is tRNA (guanine-N(1)-)-methyltransferase from Proteus mirabilis (strain HI4320).